A 338-amino-acid polypeptide reads, in one-letter code: DNA fragmentation factor subunit beta (338 aa).

The CIDE-N domain maps to 4 to 80 (KPKSVKLRAL…LLTLGQAWQG (77 aa)).

As to quaternary structure, heterodimer of DFFA and DFFB. Interacts with H1-1.

The protein resides in the cytoplasm. It is found in the nucleus. Inhibited by DFFA (DFF45). Functionally, nuclease that induces DNA fragmentation and chromatin condensation during apoptosis. Degrades naked DNA and induces apoptotic morphology. The sequence is that of DNA fragmentation factor subunit beta (DFFB) from Homo sapiens (Human).